The chain runs to 251 residues: uncharacterized protein (251 aa).

Belongs to the methyltransferase superfamily.

The protein localises to the cytoplasm. It localises to the nucleus. Functionally, probable methyltransferase. This is an uncharacterized protein from Schizosaccharomyces pombe (strain 972 / ATCC 24843) (Fission yeast).